The primary structure comprises 445 residues: Trigger factor (445 aa).

The PPIase FKBP-type domain occupies 163 to 248; sequence GDTVVIDYVG…IHEVKVKELP (86 aa). Positions 425–445 are disordered; it reads KEVESAKDDADKEASDAKADK.

This sequence belongs to the FKBP-type PPIase family. Tig subfamily.

Its subcellular location is the cytoplasm. The catalysed reaction is [protein]-peptidylproline (omega=180) = [protein]-peptidylproline (omega=0). Its function is as follows. Involved in protein export. Acts as a chaperone by maintaining the newly synthesized protein in an open conformation. Functions as a peptidyl-prolyl cis-trans isomerase. The sequence is that of Trigger factor from Lacticaseibacillus casei (strain BL23) (Lactobacillus casei).